A 370-amino-acid polypeptide reads, in one-letter code: uncharacterized protein (370 aa).

Lysine 207 is modified (N6-(pyridoxal phosphate)lysine).

The protein belongs to the class-V pyridoxal-phosphate-dependent aminotransferase family. Pyridoxal 5'-phosphate is required as a cofactor.

This is an uncharacterized protein from Bacillus subtilis (strain 168).